Here is a 271-residue protein sequence, read N- to C-terminus: Virulence regulon transcriptional activator VirF (271 aa).

One can recognise an HTH araC/xylS-type domain in the interval 167 to 265 (ERLQKFMEEN…GCTPSQARLT (99 aa)). 2 DNA-binding regions (H-T-H motif) span residues 184–205 (SKFA…GTVY) and 232–255 (IVDI…RRRF).

In terms of biological role, transcriptional activator of the Yersinia virulence regulon. The polypeptide is Virulence regulon transcriptional activator VirF (virF) (Yersinia enterocolitica).